We begin with the raw amino-acid sequence, 1894 residues long: Plexin-A2 (1894 aa).

A signal peptide spans M1–G34. 2 N-linked (GlcNAc...) asparagine glycosylation sites follow: N15 and N76. The region spanning M35 to V508 is the Sema domain. The Extracellular segment spans residues M35–P1237. Disulfide bonds link C94-C103 and C129-C137. Residues N163 and N327 are each glycosylated (N-linked (GlcNAc...) asparagine). Disulfide bonds link C284–C405, C300–C356, C374–C393, C511–C528, C517–C559, C520–C537, C531–C543, and C594–C613. N-linked (GlcNAc...) asparagine glycosylation is found at N598, N696, and N756. IPT/TIG domains are found at residues P858–F951, P954–Y1037, P1041–Y1139, and P1143–V1228. N-linked (GlcNAc...) asparagine glycans are attached at residues N1180 and N1205. A helical membrane pass occupies residues A1238 to I1258. The Cytoplasmic portion of the chain corresponds to A1259–S1894. Residues K1261–S1310 are a coiled coil. Phosphoserine is present on S1612.

This sequence belongs to the plexin family. Homodimer. Interacts with RND1. Interacts directly with NRP1 and NRP2. The PLXNA2 homodimer interacts with a SEMA6A homodimer, giving rise to a heterotetramer.

Its subcellular location is the cell membrane. Its function is as follows. Coreceptor for SEMA3A and SEMA6A. Necessary for signaling by SEMA6A and class 3 semaphorins and subsequent remodeling of the cytoskeleton. Plays a role in axon guidance, invasive growth and cell migration. Class 3 semaphorins bind to a complex composed of a neuropilin and a plexin. The plexin modulates the affinity of the complex for specific semaphorins, and its cytoplasmic domain is required for the activation of down-stream signaling events in the cytoplasm. The sequence is that of Plexin-A2 (Plxna2) from Mus musculus (Mouse).